The chain runs to 79 residues: UPF0154 protein lwe1321 (79 aa).

Residues 2–22 form a helical membrane-spanning segment; it reads WIYILVGIICLLAGLAGGFFI. Residues 57-66 show a composition bias toward polar residues; the sequence is KINQMMSAMN. The disordered stretch occupies residues 57–79; that stretch reads KINQMMSAMNKQQEKEKPKKAKK.

This sequence belongs to the UPF0154 family.

The protein resides in the cell membrane. This is UPF0154 protein lwe1321 from Listeria welshimeri serovar 6b (strain ATCC 35897 / DSM 20650 / CCUG 15529 / CIP 8149 / NCTC 11857 / SLCC 5334 / V8).